The following is a 353-amino-acid chain: Guanine nucleotide-binding protein G(q) subunit alpha (353 aa).

S-palmitoyl cysteine attachment occurs at residues cysteine 3 and cysteine 4. A G-alpha domain is found at 32-353; sequence RELKLLLLGT…QLNLKEYNLV (322 aa). The interval 35 to 48 is G1 motif; that stretch reads KLLLLGTGESGKST. GTP contacts are provided by residues 40-47, 174-180, 199-203, 268-271, and alanine 325; these read GTGESGKS, LRVRVPT, DVGGQ, and NKKD. Residues serine 47 and threonine 180 each contribute to the Mg(2+) site. The interval 172–180 is G2 motif; sequence DILRVRVPT. A G3 motif region spans residues 195–204; the sequence is FRMVDVGGQR. The G4 motif stretch occupies residues 264-271; the sequence is ILFLNKKD. The interval 323-328 is G5 motif; sequence TCATDT.

Belongs to the G-alpha family. G(q) subfamily. As to quaternary structure, g proteins are composed of 3 units; alpha, beta and gamma. The alpha chain contains the guanine nucleotide binding site.

Its function is as follows. Guanine nucleotide-binding proteins (G proteins) are involved as modulators or transducers in various transmembrane signaling systems. The polypeptide is Guanine nucleotide-binding protein G(q) subunit alpha (Lymnaea stagnalis (Great pond snail)).